A 1242-amino-acid chain; its full sequence is Reverse gyrase 1 (1242 aa).

An RG N-terminal-type zinc finger spans residues 6 to 46; the sequence is KVPPSIYTRSCPNCGGNISSQRLFNGSVCESCLKDDREFSN. Zn(2+)-binding residues include Cys16, Cys19, Cys34, and Cys37. Residues Gln93 and 110 to 117 contribute to the ATP site; that span reads APPGLGKT. Positions 97–298 constitute a Helicase ATP-binding domain; that stretch reads TIRFLRGESF…SLMGFRPGSS (202 aa). Positions 214 to 217 match the DEAD box motif; it reads DDVD. The segment at 615–1242 is topoisomerase I; that stretch reads LSVKTTLFIV…ELYNEIQTIS (628 aa). The 167-residue stretch at 619–785 folds into the Toprim domain; that stretch reads TTLFIVESPN…NIKRAEFHEV (167 aa). Glu625 is a binding site for Mg(2+). The RG C-terminal-type; atypical zinc-finger motif lies at 703–731; that stretch reads IKKCEKGHQIVKDLSQNKCPICGSRIVTD. Positions 706, 710, 721, and 724 each coordinate Zn(2+). Asp754 lines the Mg(2+) pocket. The region spanning 801-1242 is the Topo IA-type catalytic domain; the sequence is NDNLVKSQIV…ELYNEIQTIS (442 aa). The active-site O-(5'-phospho-DNA)-tyrosine intermediate is the Tyr965.

In the N-terminal section; belongs to the DEAD box helicase family. DDVD subfamily. This sequence in the C-terminal section; belongs to the type IA topoisomerase family. As to quaternary structure, monomer. It depends on Zn(2+) as a cofactor. Mg(2+) is required as a cofactor.

Its subcellular location is the cytoplasm. The enzyme catalyses ATP + H2O = ADP + phosphate + H(+). At least one of the two reverse gyrase proteins is inhibited by actinomycin D. Highly sensitive to NaCl concentrations, maximal positive supercoiling is observed with 10 mM NaCl; as NaCl rises, supercoiling decreases. At 300 mM NaCl relaxes but does not introduce positive supercoils into negatively supercoiled substrate, at 400 mM NaCl does not relax DNA. Modifies the topological state of DNA by introducing positive supercoils in an ATP-dependent process. Increases the linking number in steps of +1. Involved in homeostatic control of DNA topology in balance with type II topoisomerase 6 (TopoVI); levels of TopoVI are constant at 80 and 88 degrees Celsius and TopoVI is probably less active at 88 degrees (characterized enzyme is from S.shibatae B12), so reverse gyrase mediates most of the fine-tuning of DNA topology. Changes the DNA linking number step-by-step in a distributive manner. At low protein to DNA ratios mostly relaxes negatively supercoiled substrate, as ratios rise more positive supercoils are introduced. At 90 degrees Celsius introduces 19 positive supercoils into pTZ18R DNA (probably 2860 bp), less than TopR2. Relaxes negatively supercoiled DNA in the absence of ATP. It cleaves transiently a single DNA strand and remains covalently bound to the 5' DNA end through a tyrosine residue. May be involved in DNA damage response. Its activity is inhibited by the DNA-binding protein 7d (Sso7d), suggesting that the Sso7d activity might counteract the overwinding effect of reverse gyrase. In terms of biological role, resolves 4-way Holliday junctions (HJ) with 20 bases in each arm in vitro, distorting the junction. Very high protein levels are required, but total enzyme content of the cell (there are 2 reverse gyrases in this organism) is estimated to be 20-200 molecules/cell. HJ resolution does not require either ATPase activity or the active tyrosine. The individual domains do not resolve HJs but do so when mixed. Also unwinds a fork substrate. Its function is as follows. There are 2 genes for this protein in the cell. During exponential growth this is the less expressed isoform (about 52 molecules per cell at 80 degrees Celsius, about 28 molecules at 88 degrees Celsius); this isoform is more active at higher temperature. Grows actively at both 80 and 88 degrees Celsius; survives a long exposure at 45 degrees Celsius without DNA replication or cell division occurring. Experiments using whole cell extracts do not distinguish which isoform is present, the results are probably a mixture of the two forms. The sequence is that of Reverse gyrase 1 from Saccharolobus solfataricus (strain ATCC 35092 / DSM 1617 / JCM 11322 / P2) (Sulfolobus solfataricus).